The sequence spans 101 residues: Small ribosomal subunit protein uS14 (101 aa).

Belongs to the universal ribosomal protein uS14 family. As to quaternary structure, part of the 30S ribosomal subunit. Contacts proteins S3 and S10.

Functionally, binds 16S rRNA, required for the assembly of 30S particles and may also be responsible for determining the conformation of the 16S rRNA at the A site. In Blochmanniella pennsylvanica (strain BPEN), this protein is Small ribosomal subunit protein uS14.